A 367-amino-acid chain; its full sequence is THO complex subunit 6 (367 aa).

WD repeat units lie at residues 23–67 (IETR…SQSA), 88–129 (AHEG…ESDV), 157–196 (SPMP…IKMT), 199–240 (GHSD…KVIG), 243–283 (DKKS…CVQT), 285–322 (PIPA…LSQI), and 324–363 (CAPC…CTFR).

This sequence belongs to the WD repeat THOC6 family. In terms of assembly, component of the THO complex, which is composed of THO1, THO2, THO3, THO5, THO6 and THO7. Interacts with ABI5, DDB1A and DWA2.

The protein localises to the nucleus. It participates in protein modification; protein ubiquitination. Functionally, acts as a component of the THO subcomplex of the TREX complex which is thought to couple mRNA transcription, processing and nuclear export. In terms of biological role, component of the CUL4-RBX1-DDB1-DWA1/DWA2 E3 ubiquitin-protein ligase complex that acts as a negative regulator in abscisic acid (ABA) signaling. May function as the substrate recognition module within this complex leading to ABI5 degradation. Functionally redundant with DWA2. This Arabidopsis thaliana (Mouse-ear cress) protein is THO complex subunit 6 (THO6).